The primary structure comprises 434 residues: Cytochrome P450 144 (434 aa).

Residues Asp124 and His128 each coordinate substrate. Residues Arg132, Arg326, His383, and Cys385 each coordinate heme.

It belongs to the cytochrome P450 family. Monomer. It depends on heme as a cofactor.

The protein is Cytochrome P450 144 (cyp144) of Mycobacterium tuberculosis (strain CDC 1551 / Oshkosh).